The chain runs to 201 residues: 3-isopropylmalate dehydratase small subunit (201 aa).

The protein belongs to the LeuD family. LeuD type 1 subfamily. As to quaternary structure, heterodimer of LeuC and LeuD.

The enzyme catalyses (2R,3S)-3-isopropylmalate = (2S)-2-isopropylmalate. It functions in the pathway amino-acid biosynthesis; L-leucine biosynthesis; L-leucine from 3-methyl-2-oxobutanoate: step 2/4. Catalyzes the isomerization between 2-isopropylmalate and 3-isopropylmalate, via the formation of 2-isopropylmaleate. The chain is 3-isopropylmalate dehydratase small subunit from Parvibaculum lavamentivorans (strain DS-1 / DSM 13023 / NCIMB 13966).